The primary structure comprises 301 residues: Phosphatidylserine decarboxylase proenzyme (301 aa).

Active-site charge relay system; for autoendoproteolytic cleavage activity residues include aspartate 117, histidine 173, and serine 260. The active-site Schiff-base intermediate with substrate; via pyruvic acid; for decarboxylase activity is serine 260. Serine 260 carries the post-translational modification Pyruvic acid (Ser); by autocatalysis.

Belongs to the phosphatidylserine decarboxylase family. PSD-B subfamily. Prokaryotic type II sub-subfamily. In terms of assembly, heterodimer of a large membrane-associated beta subunit and a small pyruvoyl-containing alpha subunit. It depends on pyruvate as a cofactor. Is synthesized initially as an inactive proenzyme. Formation of the active enzyme involves a self-maturation process in which the active site pyruvoyl group is generated from an internal serine residue via an autocatalytic post-translational modification. Two non-identical subunits are generated from the proenzyme in this reaction, and the pyruvate is formed at the N-terminus of the alpha chain, which is derived from the carboxyl end of the proenzyme. The autoendoproteolytic cleavage occurs by a canonical serine protease mechanism, in which the side chain hydroxyl group of the serine supplies its oxygen atom to form the C-terminus of the beta chain, while the remainder of the serine residue undergoes an oxidative deamination to produce ammonia and the pyruvoyl prosthetic group on the alpha chain. During this reaction, the Ser that is part of the protease active site of the proenzyme becomes the pyruvoyl prosthetic group, which constitutes an essential element of the active site of the mature decarboxylase.

It localises to the cell membrane. The enzyme catalyses a 1,2-diacyl-sn-glycero-3-phospho-L-serine + H(+) = a 1,2-diacyl-sn-glycero-3-phosphoethanolamine + CO2. It functions in the pathway phospholipid metabolism; phosphatidylethanolamine biosynthesis; phosphatidylethanolamine from CDP-diacylglycerol: step 2/2. In terms of biological role, catalyzes the formation of phosphatidylethanolamine (PtdEtn) from phosphatidylserine (PtdSer). The sequence is that of Phosphatidylserine decarboxylase proenzyme from Chlamydia muridarum (strain MoPn / Nigg).